Here is a 151-residue protein sequence, read N- to C-terminus: Transcription antitermination protein NusB (151 aa).

It belongs to the NusB family.

Functionally, involved in transcription antitermination. Required for transcription of ribosomal RNA (rRNA) genes. Binds specifically to the boxA antiterminator sequence of the ribosomal RNA (rrn) operons. The sequence is that of Transcription antitermination protein NusB from Photobacterium profundum (strain SS9).